The primary structure comprises 470 residues: ATP synthase subunit beta (470 aa).

Position 155 to 162 (155 to 162) interacts with ATP; sequence GGAGVGKT.

It belongs to the ATPase alpha/beta chains family. In terms of assembly, F-type ATPases have 2 components, CF(1) - the catalytic core - and CF(0) - the membrane proton channel. CF(1) has five subunits: alpha(3), beta(3), gamma(1), delta(1), epsilon(1). CF(0) has three main subunits: a(1), b(2) and c(9-12). The alpha and beta chains form an alternating ring which encloses part of the gamma chain. CF(1) is attached to CF(0) by a central stalk formed by the gamma and epsilon chains, while a peripheral stalk is formed by the delta and b chains.

The protein resides in the cell membrane. The enzyme catalyses ATP + H2O + 4 H(+)(in) = ADP + phosphate + 5 H(+)(out). Its function is as follows. Produces ATP from ADP in the presence of a proton gradient across the membrane. The catalytic sites are hosted primarily by the beta subunits. This is ATP synthase subunit beta from Staphylococcus epidermidis (strain ATCC 35984 / DSM 28319 / BCRC 17069 / CCUG 31568 / BM 3577 / RP62A).